The primary structure comprises 500 residues: Aldehyde dehydrogenase, mitochondrial (500 aa).

An N6-acetyllysine mark is found at Lys-35, Lys-56, Lys-61, and Lys-142. Position 245–250 (245–250 (GSTEVG)) interacts with NAD(+). The active-site Proton acceptor is the Glu-268. The Nucleophile role is filled by Cys-302. 8 positions are modified to N6-acetyllysine: Lys-351, Lys-358, Lys-366, Lys-390, Lys-409, Lys-411, Lys-424, and Lys-434.

The protein belongs to the aldehyde dehydrogenase family. As to quaternary structure, homotetramer. In terms of processing, in response to mitochondrial stress, the precursor protein is ubiquitinated by the SIFI complex in the cytoplasm before mitochondrial import, leading to its degradation. Within the SIFI complex, UBR4 initiates ubiquitin chain that are further elongated or branched by KCMF1.

Its subcellular location is the mitochondrion matrix. The enzyme catalyses an aldehyde + NAD(+) + H2O = a carboxylate + NADH + 2 H(+). Its pathway is alcohol metabolism; ethanol degradation; acetate from ethanol: step 2/2. Required for clearance of cellular formaldehyde, a cytotoxic and carcinogenic metabolite that induces DNA damage. This is Aldehyde dehydrogenase, mitochondrial (ALDH2) from Mesocricetus auratus (Golden hamster).